We begin with the raw amino-acid sequence, 1108 residues long: cGMP-inhibited 3',5'-cyclic phosphodiesterase 3B (1108 aa).

The segment covering 1-11 (MRKDERERDTP) has biased composition (basic and acidic residues). The tract at residues 1–32 (MRKDERERDTPAMRSPPPPPPPATATAASPPE) is disordered. Positions 1–32 (MRKDERERDTPAMRSPPPPPPPATATAASPPE) are interaction with RAPGEF3. Residues 14–23 (RSPPPPPPPA) are compositionally biased toward pro residues. At Ser15 the chain carries Phosphoserine. 6 consecutive transmembrane segments (helical) span residues 73–93 (AGAR…LLGA), 114–134 (LSLS…CFLT), 144–164 (AGSW…FAAW), 175–195 (AAAA…LTLA), 204–224 (VLVL…LGAL), and 231–251 (LLSC…DHFF). Ser279 bears the Phosphoserine; by PKB/AKT1 or PKB/AKT2 mark. Residues Ser280 and Ser427 each carry the phosphoserine modification. Positions 405 to 448 (DRKLHKGLSSKPSFPTAQLRRSSGASGLLTSEHHSRWDRSGGKR) are disordered. The segment covering 414-433 (SKPSFPTAQLRRSSGASGLL) has biased composition (polar residues). An interaction with PIK3R6 region spans residues 421 to 445 (AQLRRSSGASGLLTSEHHSRWDRSG). A compositionally biased stretch (basic and acidic residues) spans 435–445 (SEHHSRWDRSG). In terms of domain architecture, PDEase spans 633 to 1070 (PNIDQEVLLD…KIWKEIIEEE (438 aa)). Residue His719 is the Proton donor of the active site. His719 serves as a coordination point for AMP. Residues His723, His803, Asp804, and Asp919 each coordinate Mg(2+). AMP contacts are provided by Asp804, Asp919, and Gln970. The segment covering 999 to 1033 (EEGDDTESDDDDDDDDDDDDDDDEELDSDDEETED) has biased composition (acidic residues). The interval 999–1042 (EEGDDTESDDDDDDDDDDDDDDDEELDSDDEETEDNLNPKPQRR) is disordered.

This sequence belongs to the cyclic nucleotide phosphodiesterase family. PDE3 subfamily. Homodimer. Interacts with PIK3CG; regulates PDE3B activity and thereby cAMP levels in cells. Interacts with RAPGEF3 and PIK3R6; form a signaling complex that regulates phosphatidylinositol 3-kinase gamma in angiogenesis. Interacts with ABHD15; this interaction regulates PDE3B's stability and expression and, thereby, impacts the antilipolytic action of insulin. Mg(2+) serves as cofactor. It depends on Mn(2+) as a cofactor. Post-translationally, phosphorylation at Ser-279 mediates insulin-induced activation of PDE3B. As to expression, abundant in adipose tissues.

It is found in the membrane. It carries out the reaction a nucleoside 3',5'-cyclic phosphate + H2O = a nucleoside 5'-phosphate + H(+). It catalyses the reaction 3',5'-cyclic AMP + H2O = AMP + H(+). The enzyme catalyses 3',5'-cyclic GMP + H2O = GMP + H(+). Inhibited by cGMP. Cyclic nucleotide phosphodiesterase with a dual-specificity for the second messengers cAMP and cGMP, which are key regulators of many important physiological processes. Regulates angiogenesis by inhibiting the cAMP-dependent guanine nucleotide exchange factor RAPGEF3 and downstream phosphatidylinositol 3-kinase gamma-mediated signaling. Controls cardiac contractility by reducing cAMP concentration in cardiocytes. This Rattus norvegicus (Rat) protein is cGMP-inhibited 3',5'-cyclic phosphodiesterase 3B.